Consider the following 122-residue polypeptide: Holo-[acyl-carrier-protein] synthase (122 aa).

Residues D8 and E57 each coordinate Mg(2+).

This sequence belongs to the P-Pant transferase superfamily. AcpS family. It depends on Mg(2+) as a cofactor.

Its subcellular location is the cytoplasm. It carries out the reaction apo-[ACP] + CoA = holo-[ACP] + adenosine 3',5'-bisphosphate + H(+). In terms of biological role, transfers the 4'-phosphopantetheine moiety from coenzyme A to a Ser of acyl-carrier-protein. This chain is Holo-[acyl-carrier-protein] synthase, found in Protochlamydia amoebophila (strain UWE25).